A 229-amino-acid chain; its full sequence is Large ribosomal subunit protein uL1 (229 aa).

This sequence belongs to the universal ribosomal protein uL1 family. In terms of assembly, part of the 50S ribosomal subunit.

Functionally, binds directly to 23S rRNA. The L1 stalk is quite mobile in the ribosome, and is involved in E site tRNA release. Protein L1 is also a translational repressor protein, it controls the translation of the L11 operon by binding to its mRNA. The sequence is that of Large ribosomal subunit protein uL1 from Clostridium botulinum (strain Alaska E43 / Type E3).